The sequence spans 240 residues: Adapter protein MecA (240 aa).

Positions 118 to 138 (EQRAQQQKHSHKSEQKQTKQR) are disordered.

It belongs to the MecA family. As to quaternary structure, homodimer.

Functionally, enables the recognition and targeting of unfolded and aggregated proteins to the ClpC protease or to other proteins involved in proteolysis. This is Adapter protein MecA from Staphylococcus haemolyticus (strain JCSC1435).